The sequence spans 257 residues: Enterotoxin type E (257 aa).

Positions 1–27 are cleaved as a signal peptide; it reads MKKTAFILLLFIALTLTTSPLVNGSEK. Cys120 and Cys130 are joined by a disulfide. Residues His211, His249, and Asp251 each coordinate Zn(2+).

It belongs to the staphylococcal/streptococcal toxin family. In terms of assembly, interacts with host MHC class II molecules composed of alpha/HLA-DRA and beta/HLA-DRB1 chains. Interacts with host T-cell receptor beta variable TRBV7-9. Zn(2+) is required as a cofactor.

The protein resides in the secreted. Functionally, staphylococcal enterotoxin that activates the host immune system by binding as unprocessed molecules to major histocompatibility (MHC) complex class II and T-cell receptor (TCR) molecules. In turn, this ternary complex activates a large number of T-lymphocytes initiating a systemic release of pro-inflammatory cytokines. Also causes the intoxication staphylococcal food poisoning syndrome. This is Enterotoxin type E (entE) from Staphylococcus aureus.